Here is a 209-residue protein sequence, read N- to C-terminus: Glycerol-3-phosphate acyltransferase (209 aa).

Transmembrane regions (helical) follow at residues 7–27 (IELA…AIIV), 85–105 (AIIL…FFGF), 117–137 (VMFG…LFVA), 142–162 (ISSL…YLLA), and 166–183 (MAWV…FWRH).

This sequence belongs to the PlsY family. In terms of assembly, probably interacts with PlsX.

Its subcellular location is the cell inner membrane. It carries out the reaction an acyl phosphate + sn-glycerol 3-phosphate = a 1-acyl-sn-glycero-3-phosphate + phosphate. Its pathway is lipid metabolism; phospholipid metabolism. Functionally, catalyzes the transfer of an acyl group from acyl-phosphate (acyl-PO(4)) to glycerol-3-phosphate (G3P) to form lysophosphatidic acid (LPA). This enzyme utilizes acyl-phosphate as fatty acyl donor, but not acyl-CoA or acyl-ACP. The protein is Glycerol-3-phosphate acyltransferase of Hydrogenovibrio crunogenus (strain DSM 25203 / XCL-2) (Thiomicrospira crunogena).